The chain runs to 519 residues: MIOREX complex component 12 (519 aa).

The N-terminal 35 residues, 1–35, are a transit peptide targeting the mitochondrion; the sequence is MLRSLHSAATLSNKRFYSLISHSNRKNIIKKLLRH.

As to quaternary structure, associates with the mitochondrial ribosome.

Its subcellular location is the mitochondrion. Component of MIOREX complexes, large expressome-like assemblies of ribosomes with factors involved in all the steps of post-transcriptional gene expression. The chain is MIOREX complex component 12 from Saccharomyces cerevisiae (strain ATCC 204508 / S288c) (Baker's yeast).